Consider the following 251-residue polypeptide: Probable ATP-dependent transporter ycf16 (251 aa).

The region spanning 6 to 250 (LEIKDLYASV…EKHGYDWITQ (245 aa)) is the ABC transporter domain. 38–45 (GPNGSGKS) serves as a coordination point for ATP.

The protein belongs to the ABC transporter superfamily. Ycf16 family.

Its subcellular location is the plastid. It localises to the chloroplast. The polypeptide is Probable ATP-dependent transporter ycf16 (ycf16) (Pyropia yezoensis (Susabi-nori)).